The following is a 154-amino-acid chain: 6,7-dimethyl-8-ribityllumazine synthase (154 aa).

Residues Phe-22, 56–58 (AFE), and 81–83 (VLI) contribute to the 5-amino-6-(D-ribitylamino)uracil site. A (2S)-2-hydroxy-3-oxobutyl phosphate-binding site is contributed by 86–87 (ET). Catalysis depends on His-89, which acts as the Proton donor. Leu-114 is a 5-amino-6-(D-ribitylamino)uracil binding site. Arg-128 is a binding site for (2S)-2-hydroxy-3-oxobutyl phosphate.

Belongs to the DMRL synthase family.

It carries out the reaction (2S)-2-hydroxy-3-oxobutyl phosphate + 5-amino-6-(D-ribitylamino)uracil = 6,7-dimethyl-8-(1-D-ribityl)lumazine + phosphate + 2 H2O + H(+). It functions in the pathway cofactor biosynthesis; riboflavin biosynthesis; riboflavin from 2-hydroxy-3-oxobutyl phosphate and 5-amino-6-(D-ribitylamino)uracil: step 1/2. Catalyzes the formation of 6,7-dimethyl-8-ribityllumazine by condensation of 5-amino-6-(D-ribitylamino)uracil with 3,4-dihydroxy-2-butanone 4-phosphate. This is the penultimate step in the biosynthesis of riboflavin. The sequence is that of 6,7-dimethyl-8-ribityllumazine synthase from Chlamydia pneumoniae (Chlamydophila pneumoniae).